A 545-amino-acid chain; its full sequence is 2-succinyl-5-enolpyruvyl-6-hydroxy-3-cyclohexene-1-carboxylate synthase (545 aa).

Over residues 170 to 185 the composition is skewed to polar residues; the sequence is QVSGLQRSAPAPSSDS. The segment at 170–193 is disordered; the sequence is QVSGLQRSAPAPSSDSPLGAAPQL.

Belongs to the TPP enzyme family. MenD subfamily. As to quaternary structure, homodimer. Requires Mg(2+) as cofactor. The cofactor is Mn(2+). Thiamine diphosphate serves as cofactor.

It carries out the reaction isochorismate + 2-oxoglutarate + H(+) = 5-enolpyruvoyl-6-hydroxy-2-succinyl-cyclohex-3-ene-1-carboxylate + CO2. It participates in quinol/quinone metabolism; 1,4-dihydroxy-2-naphthoate biosynthesis; 1,4-dihydroxy-2-naphthoate from chorismate: step 2/7. Its pathway is cofactor biosynthesis; phylloquinone biosynthesis. Catalyzes the thiamine diphosphate-dependent decarboxylation of 2-oxoglutarate and the subsequent addition of the resulting succinic semialdehyde-thiamine pyrophosphate anion to isochorismate to yield 2-succinyl-5-enolpyruvyl-6-hydroxy-3-cyclohexene-1-carboxylate (SEPHCHC). The polypeptide is 2-succinyl-5-enolpyruvyl-6-hydroxy-3-cyclohexene-1-carboxylate synthase (Parasynechococcus marenigrum (strain WH8102)).